We begin with the raw amino-acid sequence, 281 residues long: Homeobox protein Hox-A5 (281 aa).

Disordered regions lie at residues 65-144 (VGNE…PCSS) and 162-183 (PLEE…SDST). 2 stretches are compositionally biased toward polar residues: residues 68-99 (ERTQ…STGT) and 114-127 (VASS…QSQH). The segment covering 132–144 (NSITTPCSTPCSS) has biased composition (low complexity). Polar residues predominate over residues 172-183 (APTTPQNVSDST). The Antp-type hexapeptide signature appears at 187 to 192 (IYPWMR). The homeobox DNA-binding region spans 205 to 264 (GKRARTAYTRYQTLELEKEFHFNRYLTRRRRIEIAHALCLSERQIKIWFQNRRMKWKKDN).

Belongs to the Antp homeobox family.

The protein localises to the nucleus. Functionally, sequence-specific transcription factor which is part of a developmental regulatory system that provides cells with specific positional identities on the anterior-posterior axis. The protein is Homeobox protein Hox-A5 (hoxa5) of Morone saxatilis (Striped bass).